We begin with the raw amino-acid sequence, 112 residues long: Cell cycle protein GpsB (112 aa).

Positions 42 to 77 form a coiled coil; the sequence is YQKMADMNNEVVKLSEENHKLKKELEELRLRVATSR. The disordered stretch occupies residues 74–96; it reads ATSRPQDNKNFSSNNSSSASNNV. Over residues 81–95 the composition is skewed to low complexity; the sequence is NKNFSSNNSSSASNN.

The protein belongs to the GpsB family. In terms of assembly, forms polymers through the coiled coil domains. Interacts with PBP1, MreC and EzrA.

The protein resides in the cytoplasm. In terms of biological role, divisome component that associates with the complex late in its assembly, after the Z-ring is formed, and is dependent on DivIC and PBP2B for its recruitment to the divisome. Together with EzrA, is a key component of the system that regulates PBP1 localization during cell cycle progression. Its main role could be the removal of PBP1 from the cell pole after pole maturation is completed. Also contributes to the recruitment of PBP1 to the division complex. Not essential for septum formation. The sequence is that of Cell cycle protein GpsB from Staphylococcus epidermidis (strain ATCC 12228 / FDA PCI 1200).